Reading from the N-terminus, the 323-residue chain is L-lactate dehydrogenase (323 aa).

NAD(+) contacts are provided by residues Val-18, Asp-39, Arg-44, Tyr-69, and Gly-83 to Ala-84. 2 residues coordinate substrate: Gln-86 and Arg-92. NAD(+) is bound by residues Thr-105, Ala-122–Asn-124, and Ser-147. Asn-124–Asp-127 contributes to the substrate binding site. Asp-152–Arg-155 serves as a coordination point for substrate. Catalysis depends on His-179, which acts as the Proton acceptor. At Tyr-223 the chain carries Phosphotyrosine. Thr-232 lines the substrate pocket.

Belongs to the LDH/MDH superfamily. LDH family. Homotetramer.

The protein localises to the cytoplasm. The catalysed reaction is (S)-lactate + NAD(+) = pyruvate + NADH + H(+). Its pathway is fermentation; pyruvate fermentation to lactate; (S)-lactate from pyruvate: step 1/1. Catalyzes the conversion of lactate to pyruvate. The protein is L-lactate dehydrogenase of Pediococcus acidilactici.